Here is a 500-residue protein sequence, read N- to C-terminus: Cytochrome P450 2D4 (500 aa).

A heme-binding site is contributed by Cys-446.

This sequence belongs to the cytochrome P450 family. Requires heme as cofactor. In terms of tissue distribution, brain.

The protein localises to the endoplasmic reticulum membrane. It localises to the microsome membrane. The enzyme catalyses an organic molecule + reduced [NADPH--hemoprotein reductase] + O2 = an alcohol + oxidized [NADPH--hemoprotein reductase] + H2O + H(+). In terms of biological role, cytochromes P450 are a group of heme-thiolate monooxygenases. In liver microsomes, this enzyme is involved in an NADPH-dependent electron transport pathway. It oxidizes a variety of structurally unrelated compounds, including steroids, fatty acids, and xenobiotics. The protein is Cytochrome P450 2D4 (Cyp2d4) of Rattus norvegicus (Rat).